Here is a 306-residue protein sequence, read N- to C-terminus: Diacylglycerol kinase (306 aa).

The region spanning 1 to 132 is the DAGKc domain; it reads MRKRARIIYN…VDIGKMNSRY (132 aa). Residues 10 to 14, Thr41, 67 to 73, and Thr94 each bind ATP; these read NPTSG and GDGTLNE. Arg213, Asp216, and Tyr218 together coordinate Mg(2+). Catalysis depends on Glu273, which acts as the Proton acceptor.

This sequence belongs to the diacylglycerol/lipid kinase family. Homodimer. Requires Mg(2+) as cofactor.

It catalyses the reaction a 1,2-diacyl-sn-glycerol + ATP = a 1,2-diacyl-sn-glycero-3-phosphate + ADP + H(+). Its function is as follows. Catalyzes the phosphorylation of diacylglycerol (DAG) into phosphatidic acid. Is a key enzyme involved in the production of lipoteichoic acid by reintroducing DAG formed from the breakdown of membrane phospholipids into the phosphatidylglycerol biosynthetic pathway. The sequence is that of Diacylglycerol kinase (dagK) from Staphylococcus carnosus (strain TM300).